Consider the following 178-residue polypeptide: CDP-archaeol synthase (178 aa).

A run of 5 helical transmembrane segments spans residues 3 to 23 (LLLLLFSAIWYILPAYVANAV), 56 to 76 (FFGILFGIITGILQHFIVILY), 87 to 107 (LFGYIILSFLLASGTLFGDML), 123 to 145 (APILDQITFIVFALLFAYPFYPL), and 150 to 169 (IVLLLVISPIIHFSSNIIAY).

Belongs to the CDP-archaeol synthase family. Mg(2+) serves as cofactor.

It is found in the cell membrane. It carries out the reaction 2,3-bis-O-(geranylgeranyl)-sn-glycerol 1-phosphate + CTP + H(+) = CDP-2,3-bis-O-(geranylgeranyl)-sn-glycerol + diphosphate. The protein operates within membrane lipid metabolism; glycerophospholipid metabolism. Catalyzes the formation of CDP-2,3-bis-(O-geranylgeranyl)-sn-glycerol (CDP-archaeol) from 2,3-bis-(O-geranylgeranyl)-sn-glycerol 1-phosphate (DGGGP) and CTP. This reaction is the third ether-bond-formation step in the biosynthesis of archaeal membrane lipids. The chain is CDP-archaeol synthase from Methanococcus maripaludis (strain C6 / ATCC BAA-1332).